Here is a 205-residue protein sequence, read N- to C-terminus: Large ribosomal subunit protein bL25 (205 aa).

This sequence belongs to the bacterial ribosomal protein bL25 family. CTC subfamily. As to quaternary structure, part of the 50S ribosomal subunit; part of the 5S rRNA/L5/L18/L25 subcomplex. Contacts the 5S rRNA. Binds to the 5S rRNA independently of L5 and L18.

In terms of biological role, this is one of the proteins that binds to the 5S RNA in the ribosome where it forms part of the central protuberance. The protein is Large ribosomal subunit protein bL25 of Stutzerimonas stutzeri (strain A1501) (Pseudomonas stutzeri).